The primary structure comprises 206 residues: Protein GrpE (206 aa).

Positions 1-64 (MSKKASMHKE…KALEEAQQQA (64 aa)) are disordered. Positions 46 to 58 (SDAKVQELEKALE) are enriched in basic and acidic residues.

This sequence belongs to the GrpE family. In terms of assembly, homodimer.

It localises to the cytoplasm. In terms of biological role, participates actively in the response to hyperosmotic and heat shock by preventing the aggregation of stress-denatured proteins, in association with DnaK and GrpE. It is the nucleotide exchange factor for DnaK and may function as a thermosensor. Unfolded proteins bind initially to DnaJ; upon interaction with the DnaJ-bound protein, DnaK hydrolyzes its bound ATP, resulting in the formation of a stable complex. GrpE releases ADP from DnaK; ATP binding to DnaK triggers the release of the substrate protein, thus completing the reaction cycle. Several rounds of ATP-dependent interactions between DnaJ, DnaK and GrpE are required for fully efficient folding. The chain is Protein GrpE from Prosthecochloris aestuarii (strain DSM 271 / SK 413).